We begin with the raw amino-acid sequence, 485 residues long: MIMLLMVGMLMAPCVGAHALDTPNPQELPPGLSKNINITFFNGVFKNVESVAEIFDCLGSHFTWLQAVFTNFPLLLQFVNSMRCVTGLCPRDFEDYGCACRFEMEGMPVDESDICCFQHRRCYEEAVEMDCLQDPAKLSADVDCTNKQITCESEDPCERLLCTCDKAAVECLAQSGINSSLNFLDASFCLPQTPETTSGKAATLLPRGIPEKPTDTSQIALSGEVAGEVRADTLTTLSRTKSVQDLQDTQASRTTSSPGSAEIIALAKGTTHSAGIKPLRLGVSSVDNGSQEAAGKACDRLAFVHLGDGDSMTAMLQLGEMLFCLTSHCPEEFETYGCYCGREGRGEPRDTLDRCCLSHHCCLEQMRQVGCLHGRRSQSSVVCEDHMAKCVGQSLCEKLLCACDQMAAECMASAFFNQSLKSPDGAECQGEPVSCEDGMLQGTLASSVDSSSEENSEEAPPQMERLRRFLEKPPGPLGARPLGGK.

An N-terminal signal peptide occupies residues 1–17 (MIMLLMVGMLMAPCVGA). N37 carries N-linked (GlcNAc...) asparagine glycosylation. A phospholipase A2-like 1 region spans residues 75–189 (LLQFVNSMRC…SLNFLDASFC (115 aa)). 7 disulfides stabilise this stretch: C84–C144, C98–C189, C100–C116, C115–C171, C122–C164, C131–C157, and C151–C162. N178 and N288 each carry an N-linked (GlcNAc...) asparagine glycan. 2 phospholipase A2-like regions span residues 315–371 (MLQL…QVGC) and 383–435 (CEDH…PVSC). N-linked (GlcNAc...) asparagine glycosylation is present at N417. The tract at residues 444 to 485 (LASSVDSSSEENSEEAPPQMERLRRFLEKPPGPLGARPLGGK) is disordered.

It belongs to the phospholipase A2 family. In terms of assembly, interacts with OTOL1. In terms of tissue distribution, in the embryo, highly expressed in the developing otocyst with weak expression in the brain. Also expressed in nonsensory epithelia of both the vestibular and cochlear portions of the developing inner ear. Not expressed in adult or embryonic macular sensory epithelia.

The protein resides in the secreted. Functionally, major protein of the otoconia, a calcium carbonate structure in the saccule and utricle of the ear. Together with OTOL1, acts as a scaffold for otoconia biomineralization: sequesters calcium and forms interconnecting fibrils between otoconia that are incorporated into the calcium crystal structure. Together with OTOL1, modulates calcite crystal morphology and growth kinetics. It is unlikely that this protein has phospholipase A2 activity. In Mus musculus (Mouse), this protein is Otoconin-90.